Reading from the N-terminus, the 215-residue chain is Thymidylate kinase (215 aa).

11–18 (GIDGAGKS) lines the ATP pocket.

This sequence belongs to the thymidylate kinase family.

It catalyses the reaction dTMP + ATP = dTDP + ADP. Its function is as follows. Phosphorylation of dTMP to form dTDP in both de novo and salvage pathways of dTTP synthesis. In Nitrosomonas eutropha (strain DSM 101675 / C91 / Nm57), this protein is Thymidylate kinase.